A 388-amino-acid polypeptide reads, in one-letter code: MRYLTAGESHGPGLTTIIEGLPAGMPLLAEDVNKELKRRQGGHGRGARMRIEKDQVQITAGIRHGKTLGAPVAMFVENKDWKHWETVMSIEPVPEKNEKSRRVSRPRPGHADLVGGMKYGHNDMRNVLERSSARETTVRVAAGAVAKKLLHELGIEVAGHVLEIGGTRANLTRDYAVAEIQETSEASPVRCLDGVAAEEMMQKIDDAKKNGDTIGGIVEVVVGGVPAGLGSYVQWDKKLDAKIARAIVSINAFKGAEFGVGFEAARKPGSEVMDEILWSKEDGYTRRTNNLGGFEGGMTNGMPIVVRGVMKPIPTLYKPLQSVDIDSKETFNASVERSDSCAVPAASVVAEAVVAWEVAVAVLEKFDGDRFDTLKKHVEEHRNLTKEF.

Residues Arg-39 and Arg-45 each coordinate NADP(+). The segment at 95–118 (EKNEKSRRVSRPRPGHADLVGGMK) is disordered. FMN contacts are provided by residues 130-132 (RSS), 251-252 (NA), Gly-296, 311-315 (KPIPT), and Arg-337.

Belongs to the chorismate synthase family. As to quaternary structure, homotetramer. The cofactor is FMNH2.

It carries out the reaction 5-O-(1-carboxyvinyl)-3-phosphoshikimate = chorismate + phosphate. It participates in metabolic intermediate biosynthesis; chorismate biosynthesis; chorismate from D-erythrose 4-phosphate and phosphoenolpyruvate: step 7/7. Catalyzes the anti-1,4-elimination of the C-3 phosphate and the C-6 proR hydrogen from 5-enolpyruvylshikimate-3-phosphate (EPSP) to yield chorismate, which is the branch point compound that serves as the starting substrate for the three terminal pathways of aromatic amino acid biosynthesis. This reaction introduces a second double bond into the aromatic ring system. This Listeria monocytogenes serovar 1/2a (strain ATCC BAA-679 / EGD-e) protein is Chorismate synthase.